The chain runs to 385 residues: Elongation factor Ts, mitochondrial (385 aa).

The N-terminal 50 residues, 1–50, are a transit peptide targeting the mitochondrion; sequence MAWSQSARKPMIGLLFRAQQHGARGYSYSAFQAHLSSSNVDQSATLLRRF.

This sequence belongs to the EF-Ts family.

The protein localises to the mitochondrion. Functionally, associates with the EF-Tu.GDP complex and induces the exchange of GDP to GTP. It remains bound to the aminoacyl-tRNA.EF-Tu.GTP complex up to the GTP hydrolysis stage on the ribosome. The polypeptide is Elongation factor Ts, mitochondrial (Oryza sativa subsp. indica (Rice)).